The primary structure comprises 90 residues: MNKSQLIEKIAAGADISKAAAGRALDAIIASVTESLKEGDDVALVGFGTFAVKERAARTGRNPQTGKEITIAAAKVPSFRAGKALKDAVN.

This sequence belongs to the bacterial histone-like protein family. In terms of assembly, heterodimer of an alpha and a beta chain.

Functionally, histone-like DNA-binding protein which is capable of wrapping DNA to stabilize it, and thus to prevent its denaturation under extreme environmental conditions. The protein is DNA-binding protein HU-beta (hupB) of Salmonella typhi.